A 218-amino-acid chain; its full sequence is Probable signal peptidase I-2 (218 aa).

The Cytoplasmic segment spans residues 1–26; the sequence is MTENIVRETSKKKESPPENTWLELGK. The chain crosses the membrane as a helical span at residues 27 to 43; it reads TMVTAVILAIGIRTFVA. The Periplasmic portion of the chain corresponds to 44 to 218; it reads EARYIPSSSM…ISPQTVPESR (175 aa). Active-site residues include Ser-52 and Lys-100.

Belongs to the peptidase S26 family.

The protein localises to the cell membrane. It carries out the reaction Cleavage of hydrophobic, N-terminal signal or leader sequences from secreted and periplasmic proteins.. This is Probable signal peptidase I-2 (lepB2) from Synechocystis sp. (strain ATCC 27184 / PCC 6803 / Kazusa).